Consider the following 388-residue polypeptide: Cell adhesion molecule 4 (388 aa).

Positions 1–20 are cleaved as a signal peptide; that stretch reads MGRARRFQWPLLLLWAAAAG. In terms of domain architecture, Ig-like V-type spans 21-119; that stretch reads PGTGQEVQTE…DTHHQIATLT (99 aa). At 25–324 the chain is on the extracellular side; the sequence is QEVQTENVTV…VEAQTSVPYA (300 aa). N-linked (GlcNAc...) asparagine glycans are attached at residues Asn31 and Asn67. 3 cysteine pairs are disulfide-bonded: Cys44–Cys104, Cys145–Cys199, and Cys245–Cys291. 2 Ig-like C2-type domains span residues 124–219 and 224–307; these read PENP…YVLD and PTAR…YVLV. The N-linked (GlcNAc...) asparagine glycan is linked to Asn286. Residues 325–345 traverse the membrane as a helical segment; it reads IVGGILALLVFLIICVLVGMV. Residues 346 to 388 are Cytoplasmic-facing; it reads WCSVRQKGSYLTHEASGLDEQGEAREAFLNGGDGHKRKEEFFI. Ser361 is subject to Phosphoserine.

Belongs to the nectin family. In terms of assembly, monomer and homodimer. In terms of processing, N-glycosylated. As to expression, expressed in the brain and several organs including the kidney and liver.

It localises to the membrane. Involved in the cell-cell adhesion. Has calcium- and magnesium-independent cell-cell adhesion activity. May have tumor-suppressor activity. The chain is Cell adhesion molecule 4 (Cadm4) from Mus musculus (Mouse).